The following is a 562-amino-acid chain: Tryptophan 2-monooxygenase (562 aa).

Serine 54, glutamate 74, arginine 76, arginine 82, and arginine 104 together coordinate FMN. Arginine 104 serves as a coordination point for substrate.

It belongs to the tryptophan 2-monooxygenase family. FMN serves as cofactor.

It carries out the reaction L-tryptophan + O2 = indole-3-acetamide + CO2 + H2O. Its pathway is plant hormone metabolism; auxin biosynthesis. The protein is Tryptophan 2-monooxygenase (iaaM) of Pantoea agglomerans pv. gypsophilae (Erwinia herbicola).